The primary structure comprises 127 residues: Small ribosomal subunit protein uS12 (127 aa).

Asp89 carries the post-translational modification 3-methylthioaspartic acid.

The protein belongs to the universal ribosomal protein uS12 family. In terms of assembly, part of the 30S ribosomal subunit. Contacts proteins S8 and S17. May interact with IF1 in the 30S initiation complex.

In terms of biological role, with S4 and S5 plays an important role in translational accuracy. Interacts with and stabilizes bases of the 16S rRNA that are involved in tRNA selection in the A site and with the mRNA backbone. Located at the interface of the 30S and 50S subunits, it traverses the body of the 30S subunit contacting proteins on the other side and probably holding the rRNA structure together. The combined cluster of proteins S8, S12 and S17 appears to hold together the shoulder and platform of the 30S subunit. This chain is Small ribosomal subunit protein uS12, found in Campylobacter lari (strain RM2100 / D67 / ATCC BAA-1060).